A 274-amino-acid chain; its full sequence is Urease accessory protein UreD (274 aa).

It belongs to the UreD family. As to quaternary structure, ureD, UreF and UreG form a complex that acts as a GTP-hydrolysis-dependent molecular chaperone, activating the urease apoprotein by helping to assemble the nickel containing metallocenter of UreC. The UreE protein probably delivers the nickel.

It localises to the cytoplasm. In terms of biological role, required for maturation of urease via the functional incorporation of the urease nickel metallocenter. This chain is Urease accessory protein UreD, found in Klebsiella pneumoniae subsp. pneumoniae (strain ATCC 700721 / MGH 78578).